The chain runs to 150 residues: Transcriptional repressor NrdR (150 aa).

A zinc finger spans residues 3-34 (CPFCGYEETKVLDSRPVSNGTSIRRRRECLQC). The ATP-cone domain maps to 49-139 (IRIIKKDGRR…VYKEFRDLDS (91 aa)).

The protein belongs to the NrdR family. It depends on Zn(2+) as a cofactor.

Its function is as follows. Negatively regulates transcription of bacterial ribonucleotide reductase nrd genes and operons by binding to NrdR-boxes. This Petrotoga mobilis (strain DSM 10674 / SJ95) protein is Transcriptional repressor NrdR.